The following is a 275-amino-acid chain: Adenosylcobinamide-GDP ribazoletransferase (275 aa).

Transmembrane regions (helical) follow at residues 52–72, 73–93, 126–146, 181–201, 208–228, and 251–271; these read VVGV…GVLG, VTPL…NRMM, MGFS…AALV, FGAM…LVAL, VAVW…GIIA, and IGAG…VAVA.

The protein belongs to the CobS family. Requires Mg(2+) as cofactor.

It localises to the cell membrane. The catalysed reaction is alpha-ribazole + adenosylcob(III)inamide-GDP = adenosylcob(III)alamin + GMP + H(+). The enzyme catalyses alpha-ribazole 5'-phosphate + adenosylcob(III)inamide-GDP = adenosylcob(III)alamin 5'-phosphate + GMP + H(+). Its pathway is cofactor biosynthesis; adenosylcobalamin biosynthesis; adenosylcobalamin from cob(II)yrinate a,c-diamide: step 7/7. In terms of biological role, joins adenosylcobinamide-GDP and alpha-ribazole to generate adenosylcobalamin (Ado-cobalamin). Also synthesizes adenosylcobalamin 5'-phosphate from adenosylcobinamide-GDP and alpha-ribazole 5'-phosphate. The sequence is that of Adenosylcobinamide-GDP ribazoletransferase from Corynebacterium efficiens (strain DSM 44549 / YS-314 / AJ 12310 / JCM 11189 / NBRC 100395).